Consider the following 228-residue polypeptide: Cytochrome P450 monooxygenase ataY (228 aa).

A heme-binding site is contributed by C216.

This sequence belongs to the cytochrome P450 family. Heme serves as cofactor.

It participates in mycotoxin biosynthesis. In terms of biological role, cytochrome P450 monooxygenase; part of the gene cluster that mediates the biosynthesis of acetylaranotin, a member of the epipolythiodioxopiperazine (ETP) class of toxins characterized by a disulfide-bridged cyclic dipeptide. The first step of acetylaranotin biosynthesis is performed by the NRPS ataP which produces diketopiperazine cyclo-L-Phe-L-Phe via the condensation of 2 phenylalanines (L-Phe). The ataC domain of ataTC then catalyzes the formation of bishydroxylation of cyclo-L-Phe-L-Phe. The glutathione S-transferase domain ataG in ataIMG further catalyzes the conjugation of two glutathiones to the bishydroxylated intermediate. Next, the dipeptidase ataJ removes the Glu residues. The following step is performed by the carbon sulfur lyase domain ataI of ataIMG which may convert the bis-cysteinyl adduct to yield an epidithiol intermediate. The ataT domain from ataTC then catalyzes the oxidation of the free dithiols, followed by a cyclization step catalyzed by the cytochrome P450 ataF. AtaF probably acts as an epoxidase to promote a dual epoxidation formation at C8 and C9 along with C8' and C9', followed by the spontaneous nucleophilic attack of the amide nitrogens N10 and N10' to yield an intermediate with the pyrrolidine partial structure. The final steps of acetylaranotin biosynthesis involve the acetylation and ring rearrangement of an epitetrathiodiketopiperazine intermediate to produce acetylaranotin. AtaH probably catalyzes the acetylation of epitetrathiodiketopiperazine to produce a diacetate and ataY is responsible for the formation of the dihydrooxepin moiety that converts the diacetate intermediate to acetylaranotin via acetylapoaranotin. Both enzymes could function independently in the absence of the other. The acetylaranotin bis-thiomethyltransferase ataS located outside of acetylaranotin gene cluster is the main thiomethyltransferase responsible for converting acetylaranotin and its related intermediates to their methylated forms. The polypeptide is Cytochrome P450 monooxygenase ataY (Aspergillus terreus (strain NIH 2624 / FGSC A1156)).